The sequence spans 537 residues: Tripeptidyl aminopeptidase (537 aa).

An N-terminal signal peptide occupies residues 1 to 36 (MRKSSIRRRATAFGTAGALVTATLIAGAVSAPAASA). A propeptide spanning residues 37–39 (APA) is cleaved from the precursor. In terms of domain architecture, AB hydrolase-1 spans 119-497 (GALIYNPGGP…SRLITERDAG (379 aa)). The active-site Nucleophile is S245. The active site involves D470. The active-site Proton donor is H499.

This sequence belongs to the peptidase S33 family.

The protein localises to the secreted. Its function is as follows. Cleaves tripeptides from the N-termini of proteins. Does not cleave mono- or dipeptides, or N-terminally blocked peptides. In Streptomyces lividans, this protein is Tripeptidyl aminopeptidase.